A 127-amino-acid chain; its full sequence is Large ribosomal subunit protein uL24B (127 aa).

Belongs to the universal ribosomal protein uL24 family. Component of the large ribosomal subunit (LSU). Mature yeast ribosomes consist of a small (40S) and a large (60S) subunit. The 40S small subunit contains 1 molecule of ribosomal RNA (18S rRNA) and 33 different proteins (encoded by 57 genes). The large 60S subunit contains 3 rRNA molecules (25S, 5.8S and 5S rRNA) and 46 different proteins (encoded by 81 genes).

The protein localises to the cytoplasm. Component of the ribosome, a large ribonucleoprotein complex responsible for the synthesis of proteins in the cell. The small ribosomal subunit (SSU) binds messenger RNAs (mRNAs) and translates the encoded message by selecting cognate aminoacyl-transfer RNA (tRNA) molecules. The large subunit (LSU) contains the ribosomal catalytic site termed the peptidyl transferase center (PTC), which catalyzes the formation of peptide bonds, thereby polymerizing the amino acids delivered by tRNAs into a polypeptide chain. The nascent polypeptides leave the ribosome through a tunnel in the LSU and interact with protein factors that function in enzymatic processing, targeting, and the membrane insertion of nascent chains at the exit of the ribosomal tunnel. In Saccharomyces cerevisiae (strain ATCC 204508 / S288c) (Baker's yeast), this protein is Large ribosomal subunit protein uL24B.